Consider the following 87-residue polypeptide: Small ribosomal subunit protein uS17 (87 aa).

The protein belongs to the universal ribosomal protein uS17 family. In terms of assembly, part of the 30S ribosomal subunit.

Functionally, one of the primary rRNA binding proteins, it binds specifically to the 5'-end of 16S ribosomal RNA. The sequence is that of Small ribosomal subunit protein uS17 from Geobacillus stearothermophilus (Bacillus stearothermophilus).